The following is a 406-amino-acid chain: ATP phosphoribosyltransferase regulatory subunit (406 aa).

The protein belongs to the class-II aminoacyl-tRNA synthetase family. HisZ subfamily. Heteromultimer composed of HisG and HisZ subunits.

Its subcellular location is the cytoplasm. It functions in the pathway amino-acid biosynthesis; L-histidine biosynthesis; L-histidine from 5-phospho-alpha-D-ribose 1-diphosphate: step 1/9. Functionally, required for the first step of histidine biosynthesis. May allow the feedback regulation of ATP phosphoribosyltransferase activity by histidine. The sequence is that of ATP phosphoribosyltransferase regulatory subunit from Methylococcus capsulatus (strain ATCC 33009 / NCIMB 11132 / Bath).